A 376-amino-acid polypeptide reads, in one-letter code: UDP-N-acetylglucosamine 2-epimerase (376 aa).

Residues R10, K15, D95, E117, H213, Q271, F276, 290 to 292 (SGG), E296, and R313 contribute to the substrate site.

This sequence belongs to the UDP-N-acetylglucosamine 2-epimerase family. Homodimer.

It localises to the cytoplasm. It catalyses the reaction UDP-N-acetyl-alpha-D-glucosamine = UDP-N-acetyl-alpha-D-mannosamine. It functions in the pathway bacterial outer membrane biogenesis; enterobacterial common antigen biosynthesis. Its function is as follows. Catalyzes the reversible epimerization at C-2 of UDP-N-acetylglucosamine (UDP-GlcNAc) and thereby provides bacteria with UDP-N-acetylmannosamine (UDP-ManNAc), the activated donor of ManNAc residues. The polypeptide is UDP-N-acetylglucosamine 2-epimerase (Escherichia coli O157:H7).